The following is a 325-amino-acid chain: UPF0285 protein MM_0679 (325 aa).

Belongs to the UPF0285 family.

This chain is UPF0285 protein MM_0679, found in Methanosarcina mazei (strain ATCC BAA-159 / DSM 3647 / Goe1 / Go1 / JCM 11833 / OCM 88) (Methanosarcina frisia).